Here is a 162-residue protein sequence, read N- to C-terminus: Peroxiredoxin-2C (162 aa).

Positions Ile-4–Leu-162 constitute a Thioredoxin domain. Residue Cys-51 is the Cysteine sulfenic acid (-SOH) intermediate of the active site.

The protein belongs to the peroxiredoxin family. Prx5 subfamily. As to quaternary structure, monomer. Highly expressed in buds and flowers. Slightly expressed in green tissues. Also detected in pollen.

It localises to the cytoplasm. It catalyses the reaction [glutaredoxin]-dithiol + a hydroperoxide = [glutaredoxin]-disulfide + an alcohol + H2O. Its function is as follows. Thiol-specific peroxidase that catalyzes the reduction of hydrogen peroxide and organic hydroperoxides to water and alcohols, respectively. Plays a role in cell protection against oxidative stress by detoxifying peroxides and as sensor of hydrogen peroxide-mediated signaling events. The protein is Peroxiredoxin-2C (PRXIIC) of Arabidopsis thaliana (Mouse-ear cress).